Consider the following 601-residue polypeptide: uncharacterized protein (601 aa).

Transmembrane regions (helical) follow at residues 74–94 (IFFFVYYCKQALEFISTVFSI), 104–124 (VSFLLSFLLLFSLFLLIPNDG), and 531–551 (LVLLATIPVSLSSVFEVNYYY).

It is found in the endoplasmic reticulum membrane. This is an uncharacterized protein from Schizosaccharomyces pombe (strain 972 / ATCC 24843) (Fission yeast).